The chain runs to 420 residues: L-cysteine:1D-myo-inositol 2-amino-2-deoxy-alpha-D-glucopyranoside ligase (420 aa).

Residue cysteine 43 participates in Zn(2+) binding. L-cysteinyl-5'-AMP is bound by residues 43–46, threonine 58, and 81–83; these read CGIT and NIT. Residues 45 to 55 carry the 'HIGH' region motif; it reads ITPYDATHLGH. Residues 187-192 carry the 'ERGGDP' region motif; sequence ERGGDP. Tryptophan 227 provides a ligand contact to L-cysteinyl-5'-AMP. Residue cysteine 231 coordinates Zn(2+). 249–251 is an L-cysteinyl-5'-AMP binding site; the sequence is GSD. Residue histidine 256 coordinates Zn(2+). Isoleucine 289 contributes to the L-cysteinyl-5'-AMP binding site. The 'KMSKS' region motif lies at 295–299; the sequence is KMSKS.

The protein belongs to the class-I aminoacyl-tRNA synthetase family. MshC subfamily. In terms of assembly, monomer. Zn(2+) serves as cofactor.

It catalyses the reaction 1D-myo-inositol 2-amino-2-deoxy-alpha-D-glucopyranoside + L-cysteine + ATP = 1D-myo-inositol 2-(L-cysteinylamino)-2-deoxy-alpha-D-glucopyranoside + AMP + diphosphate + H(+). Functionally, catalyzes the ATP-dependent condensation of GlcN-Ins and L-cysteine to form L-Cys-GlcN-Ins. This chain is L-cysteine:1D-myo-inositol 2-amino-2-deoxy-alpha-D-glucopyranoside ligase, found in Segniliparus rotundus (strain ATCC BAA-972 / CDC 1076 / CIP 108378 / DSM 44985 / JCM 13578).